The chain runs to 282 residues: ATP synthase gamma chain (282 aa).

Belongs to the ATPase gamma chain family. In terms of assembly, F-type ATPases have 2 components, CF(1) - the catalytic core - and CF(0) - the membrane proton channel. CF(1) has five subunits: alpha(3), beta(3), gamma(1), delta(1), epsilon(1). CF(0) has three main subunits: a, b and c.

The protein localises to the cell membrane. In terms of biological role, produces ATP from ADP in the presence of a proton gradient across the membrane. The gamma chain is believed to be important in regulating ATPase activity and the flow of protons through the CF(0) complex. This is ATP synthase gamma chain from Clostridium botulinum (strain Okra / Type B1).